The primary structure comprises 138 residues: Basic phospholipase A2 Drk-b1 (138 aa).

A signal peptide spans 1-16 (MRTLWIVAMCLIGVEG). Disulfide bonds link Cys-42/Cys-131, Cys-44/Cys-60, Cys-59/Cys-111, Cys-65/Cys-138, Cys-66/Cys-104, Cys-73/Cys-97, and Cys-91/Cys-102. Residues Tyr-43, Gly-45, and Gly-47 each contribute to the Ca(2+) site. His-63 is a catalytic residue. Residue Asp-64 coordinates Ca(2+). The active site involves Asp-105.

It depends on Ca(2+) as a cofactor. As to expression, expressed by the venom gland.

The protein resides in the secreted. It carries out the reaction a 1,2-diacyl-sn-glycero-3-phosphocholine + H2O = a 1-acyl-sn-glycero-3-phosphocholine + a fatty acid + H(+). In terms of biological role, exhibits high hydrolytic activities and shows strong preference for the anionic micelles (dPPC with deoxycholate) to the zwitterionic micelles (dPPC with Triton X-100). PLA2 catalyzes the calcium-dependent hydrolysis of the 2-acyl groups in 3-sn-phosphoglycerides. This Daboia russelii (Russel's viper) protein is Basic phospholipase A2 Drk-b1.